Here is a 299-residue protein sequence, read N- to C-terminus: Glycine--tRNA ligase alpha subunit (299 aa).

The protein belongs to the class-II aminoacyl-tRNA synthetase family. Tetramer of two alpha and two beta subunits.

Its subcellular location is the cytoplasm. It carries out the reaction tRNA(Gly) + glycine + ATP = glycyl-tRNA(Gly) + AMP + diphosphate. The sequence is that of Glycine--tRNA ligase alpha subunit (glyQ) from Synechocystis sp. (strain ATCC 27184 / PCC 6803 / Kazusa).